Consider the following 368-residue polypeptide: tRNA-specific 2-thiouridylase MnmA (368 aa).

ATP contacts are provided by residues 11-18 (GMSGGVDS) and methionine 37. The interval 97–99 (NPD) is interaction with target base in tRNA. The Nucleophile role is filled by cysteine 102. A disulfide bond links cysteine 102 and cysteine 199. Position 127 (glycine 127) interacts with ATP. Residues 149-151 (KDQ) are interaction with tRNA. The active-site Cysteine persulfide intermediate is cysteine 199. Positions 311–312 (RY) are interaction with tRNA.

It belongs to the MnmA/TRMU family. In terms of assembly, interacts with TusE.

It localises to the cytoplasm. It catalyses the reaction S-sulfanyl-L-cysteinyl-[protein] + uridine(34) in tRNA + AH2 + ATP = 2-thiouridine(34) in tRNA + L-cysteinyl-[protein] + A + AMP + diphosphate + H(+). In terms of biological role, catalyzes the 2-thiolation of uridine at the wobble position (U34) of tRNA(Lys), tRNA(Glu) and tRNA(Gln), leading to the formation of s(2)U34, the first step of tRNA-mnm(5)s(2)U34 synthesis. Sulfur is provided by IscS, via a sulfur-relay system. Binds ATP and its substrate tRNAs. This Escherichia coli O139:H28 (strain E24377A / ETEC) protein is tRNA-specific 2-thiouridylase MnmA.